Here is a 95-residue protein sequence, read N- to C-terminus: Selenoprotein K (95 aa).

Residues 20–42 (LSFLTDMFWGITDFVVMFFQSII) form a helical membrane-spanning segment. Positions 47–95 (TRRGCQNSSSSTRYDDGRGPPGHPRRMGRINHGSGPSAPPMAGGGGUGR) are disordered. Position 93 (U93) is a non-standard amino acid, selenocysteine.

It belongs to the selenoprotein K family.

The protein resides in the endoplasmic reticulum membrane. It is found in the cell membrane. In terms of biological role, required for Ca(2+) flux in immune cells and plays a role in T-cell proliferation and in T-cell and neutrophil migration. Involved in endoplasmic reticulum-associated degradation (ERAD) of soluble glycosylated proteins. Required for cell surface expression of CD36 and involved in macrophage uptake of low-density lipoprotein and in foam cell formation. Required for palmitoylation. The protein is Selenoprotein K (selenok) of Xenopus laevis (African clawed frog).